Consider the following 275-residue polypeptide: 3-methyl-2-oxobutanoate hydroxymethyltransferase (275 aa).

The Mg(2+) site is built by D51 and D90. 3-methyl-2-oxobutanoate is bound by residues 51 to 52 (DS), D90, and K120. E122 serves as a coordination point for Mg(2+). E189 functions as the Proton acceptor in the catalytic mechanism.

This sequence belongs to the PanB family. As to quaternary structure, homodecamer; pentamer of dimers. Requires Mg(2+) as cofactor.

The protein localises to the cytoplasm. The enzyme catalyses 3-methyl-2-oxobutanoate + (6R)-5,10-methylene-5,6,7,8-tetrahydrofolate + H2O = 2-dehydropantoate + (6S)-5,6,7,8-tetrahydrofolate. It participates in cofactor biosynthesis; (R)-pantothenate biosynthesis; (R)-pantoate from 3-methyl-2-oxobutanoate: step 1/2. In terms of biological role, catalyzes the reversible reaction in which hydroxymethyl group from 5,10-methylenetetrahydrofolate is transferred onto alpha-ketoisovalerate to form ketopantoate. The chain is 3-methyl-2-oxobutanoate hydroxymethyltransferase from Caulobacter vibrioides (strain ATCC 19089 / CIP 103742 / CB 15) (Caulobacter crescentus).